We begin with the raw amino-acid sequence, 122 residues long: Ubiquitin-related modifier 1 (122 aa).

Polar residues predominate over residues 33–48; sequence PSTVPADNNTSVTTKD. The segment at 33–52 is disordered; it reads PSTVPADNNTSVTTKDAASP. Position 122 is a 1-thioglycine (G122). Residue G122 forms a Glycyl lysine isopeptide (Gly-Lys) (interchain with K-? in acceptor proteins) linkage.

It belongs to the URM1 family. Post-translationally, C-terminal thiocarboxylation occurs in 2 steps, it is first acyl-adenylated (-COAMP) via the hesA/moeB/thiF part of UBA4, then thiocarboxylated (-COSH) via the rhodanese domain of UBA4.

It is found in the cytoplasm. It functions in the pathway tRNA modification; 5-methoxycarbonylmethyl-2-thiouridine-tRNA biosynthesis. Functionally, acts as a sulfur carrier required for 2-thiolation of mcm(5)S(2)U at tRNA wobble positions of cytosolic tRNA(Lys), tRNA(Glu) and tRNA(Gln). Serves as sulfur donor in tRNA 2-thiolation reaction by being thiocarboxylated (-COSH) at its C-terminus by the MOCS3 homolog UBA4. The sulfur is then transferred to tRNA to form 2-thiolation of mcm(5)S(2)U. Prior mcm(5) tRNA modification by the elongator complex is required for 2-thiolation. Also acts as a ubiquitin-like protein (UBL) that is covalently conjugated via an isopeptide bond to lysine residues of target proteins such as AHP1. The thiocarboxylated form serves as substrate for conjugation and oxidative stress specifically induces the formation of UBL-protein conjugates. In Laccaria bicolor (strain S238N-H82 / ATCC MYA-4686) (Bicoloured deceiver), this protein is Ubiquitin-related modifier 1.